The primary structure comprises 260 residues: Tryptophan synthase alpha chain (260 aa).

Residues glutamate 52 and aspartate 63 each act as proton acceptor in the active site.

This sequence belongs to the TrpA family. Tetramer of two alpha and two beta chains.

The enzyme catalyses (1S,2R)-1-C-(indol-3-yl)glycerol 3-phosphate + L-serine = D-glyceraldehyde 3-phosphate + L-tryptophan + H2O. The protein operates within amino-acid biosynthesis; L-tryptophan biosynthesis; L-tryptophan from chorismate: step 5/5. Functionally, the alpha subunit is responsible for the aldol cleavage of indoleglycerol phosphate to indole and glyceraldehyde 3-phosphate. The polypeptide is Tryptophan synthase alpha chain (Streptococcus thermophilus (strain ATCC BAA-250 / LMG 18311)).